The sequence spans 332 residues: Ethylene-responsive transcription factor ERF119 (332 aa).

The tract at residues 1-33 (MAERKKRSSIQTNKPNKKPMKKKPFQLNHLPGL) is disordered. Positions 15-24 (PNKKPMKKKP) are enriched in basic residues. The segment at residues 130–187 (KPVGVRQRKWGKWAAEIRHPITKVRTWLGTYETLEQAADAYATKKLEFDALAAATSAA) is a DNA-binding region (AP2/ERF).

The protein belongs to the AP2/ERF transcription factor family. ERF subfamily.

The protein resides in the nucleus. Functionally, probably acts as a transcriptional activator. Binds to the GCC-box pathogenesis-related promoter element. May be involved in the regulation of gene expression by stress factors and by components of stress signal transduction pathways. The protein is Ethylene-responsive transcription factor ERF119 (ERF119) of Arabidopsis thaliana (Mouse-ear cress).